The sequence spans 347 residues: Isopentenyl-diphosphate delta-isomerase (347 aa).

Position 9–10 (Arg9–Lys10) interacts with substrate. Residues Ala65–Thr67, Ser95, and Asn124 each bind FMN. Substrate is bound at residue Ser95–His97. Gln154 contributes to the substrate binding site. A Mg(2+)-binding site is contributed by Glu155. Residues Lys186, Ser211, Thr216, Gly262–Arg264, and Ser283–Arg284 each bind FMN.

The protein belongs to the IPP isomerase type 2 family. Homooctamer. Dimer of tetramers. The cofactor is FMN. Requires NADPH as cofactor. Mg(2+) serves as cofactor.

It localises to the cytoplasm. The enzyme catalyses isopentenyl diphosphate = dimethylallyl diphosphate. Involved in the biosynthesis of isoprenoids. Catalyzes the 1,3-allylic rearrangement of the homoallylic substrate isopentenyl (IPP) to its allylic isomer, dimethylallyl diphosphate (DMAPP). The chain is Isopentenyl-diphosphate delta-isomerase from Staphylococcus saprophyticus subsp. saprophyticus (strain ATCC 15305 / DSM 20229 / NCIMB 8711 / NCTC 7292 / S-41).